The primary structure comprises 640 residues: Chitin elicitor receptor kinase 1 (640 aa).

The signal sequence occupies residues 1-31 (MKFQMKMKSELCRTYKYWLILLVLWLSGVTQ). The Extracellular segment spans residues 32–248 (RETGVLIVDA…GTVHWRSNVG (217 aa)). 3 cysteine pairs are disulfide-bonded: cysteine 43-cysteine 104, cysteine 49-cysteine 166, and cysteine 102-cysteine 164. LysM domains follow at residues 53–98 (AYYR…NIYL), 113–160 (FSYT…SLTI), and 179–227 (STYV…KAAN). Residues 119-125 (TNDTAEK) and 148-154 (DLSSIYS) contribute to the chitin site. Residues 249 to 269 (IIVGVVVGGIVLAVLLLFALI) traverse the membrane as a helical segment. Over 270–640 (FGFKHFRRRK…SQPPSGNDQL (371 aa)) the chain is Cytoplasmic. The disordered stretch occupies residues 286–308 (MQQSGLLSSSSMAGSKPSRSGST). The span at 289–307 (SGLLSSSSMAGSKPSRSGS) shows a compositional bias: low complexity. The region spanning 330 to 612 (FSLAKKIGQG…RFAVVQLMTL (283 aa)) is the Protein kinase domain. Residues 336-344 (IGQGGFASV) and lysine 357 contribute to the ATP site. Aspartate 452 functions as the Proton acceptor in the catalytic mechanism.

It belongs to the protein kinase superfamily. Ser/Thr protein kinase family.

It is found in the cell membrane. It carries out the reaction L-seryl-[protein] + ATP = O-phospho-L-seryl-[protein] + ADP + H(+). It catalyses the reaction L-threonyl-[protein] + ATP = O-phospho-L-threonyl-[protein] + ADP + H(+). Its function is as follows. Lysin motif (LysM) receptor kinase required as a cell surface receptor for chitin elicitor (chitooligosaccharides) signaling leading to innate immunity in response to biotic stresses. The CERK1, MEKK1a/b, MKK1a/b/c and MPK4a/b proteins are involved in pathogen defense. The pathway induces rapid growth inhibition, cell wall depositions and accumulation of defense-related transcripts. This protein is required for response to chitin. Is able to complement the A.thaliana cerk1 mutant. This Physcomitrium patens (Spreading-leaved earth moss) protein is Chitin elicitor receptor kinase 1.